A 139-amino-acid chain; its full sequence is uncharacterized protein (139 aa).

This is an uncharacterized protein from Saccharomyces cerevisiae (strain ATCC 204508 / S288c) (Baker's yeast).